We begin with the raw amino-acid sequence, 659 residues long: Threonine--tRNA ligase (659 aa).

In terms of domain architecture, TGS spans 1–61 (MSAVPELRIT…ADGDVVEEIR (61 aa)). Residues 260 to 555 (DHRKLGVELD…LLEHYAGAFP (296 aa)) are catalytic. Zn(2+) contacts are provided by cysteine 353, histidine 404, and histidine 532.

This sequence belongs to the class-II aminoacyl-tRNA synthetase family. In terms of assembly, homodimer. Zn(2+) is required as a cofactor.

Its subcellular location is the cytoplasm. It carries out the reaction tRNA(Thr) + L-threonine + ATP = L-threonyl-tRNA(Thr) + AMP + diphosphate + H(+). In terms of biological role, catalyzes the attachment of threonine to tRNA(Thr) in a two-step reaction: L-threonine is first activated by ATP to form Thr-AMP and then transferred to the acceptor end of tRNA(Thr). Also edits incorrectly charged L-seryl-tRNA(Thr). The polypeptide is Threonine--tRNA ligase (Thermobifida fusca (strain YX)).